Here is a 366-residue protein sequence, read N- to C-terminus: MTVNPMAPRILIMAGGTGGHVFPALAVAKNLAEKGWQVRWLGTADRMEARLVPQHGFDIDFIDIQGVRGNGLLRTLAAPFKIMRSIMQAREVIAEFKPQVILGMGGFASGPGGVAGRLAGIPLVLHEQNAIPGMTNKLLARIATKVLCAFPNTFALAGQSVQVVGNPVREELALLGSMKQQGQHDALKVLVVGGSLGAKVLNEVMPNVVAQLSRSLSITVWHQVGKNNLASTKACYQQMGQAVNVNVAEFIDDMEAAYRWADVVVCRSGALTVSELAAVGLPSILVPYPHAVDDHQTVNAAILVDAGAGFLLPQAILTSDNLAEKLSLFANNPEVLVQMGKQAREVAVLDATNKVAEICAELARKS.

Residues 17–19, Asn-129, Arg-169, Ser-195, Ile-251, 270–275, and Gln-296 contribute to the UDP-N-acetyl-alpha-D-glucosamine site; these read TGG and ALTVSE.

It belongs to the glycosyltransferase 28 family. MurG subfamily.

It is found in the cell inner membrane. The enzyme catalyses di-trans,octa-cis-undecaprenyl diphospho-N-acetyl-alpha-D-muramoyl-L-alanyl-D-glutamyl-meso-2,6-diaminopimeloyl-D-alanyl-D-alanine + UDP-N-acetyl-alpha-D-glucosamine = di-trans,octa-cis-undecaprenyl diphospho-[N-acetyl-alpha-D-glucosaminyl-(1-&gt;4)]-N-acetyl-alpha-D-muramoyl-L-alanyl-D-glutamyl-meso-2,6-diaminopimeloyl-D-alanyl-D-alanine + UDP + H(+). It functions in the pathway cell wall biogenesis; peptidoglycan biosynthesis. Functionally, cell wall formation. Catalyzes the transfer of a GlcNAc subunit on undecaprenyl-pyrophosphoryl-MurNAc-pentapeptide (lipid intermediate I) to form undecaprenyl-pyrophosphoryl-MurNAc-(pentapeptide)GlcNAc (lipid intermediate II). The chain is UDP-N-acetylglucosamine--N-acetylmuramyl-(pentapeptide) pyrophosphoryl-undecaprenol N-acetylglucosamine transferase from Shewanella denitrificans (strain OS217 / ATCC BAA-1090 / DSM 15013).